A 313-amino-acid chain; its full sequence is Ribosomal RNA small subunit methyltransferase H (313 aa).

S-adenosyl-L-methionine is bound by residues 36–38 (GGH), aspartate 56, phenylalanine 80, aspartate 102, and glutamine 109.

The protein belongs to the methyltransferase superfamily. RsmH family.

It is found in the cytoplasm. The enzyme catalyses cytidine(1402) in 16S rRNA + S-adenosyl-L-methionine = N(4)-methylcytidine(1402) in 16S rRNA + S-adenosyl-L-homocysteine + H(+). Functionally, specifically methylates the N4 position of cytidine in position 1402 (C1402) of 16S rRNA. In Actinobacillus pleuropneumoniae serotype 7 (strain AP76), this protein is Ribosomal RNA small subunit methyltransferase H.